We begin with the raw amino-acid sequence, 309 residues long: Porphobilinogen deaminase (309 aa).

Residue cysteine 234 is modified to S-(dipyrrolylmethanemethyl)cysteine.

Belongs to the HMBS family. As to quaternary structure, monomer. It depends on dipyrromethane as a cofactor.

The enzyme catalyses 4 porphobilinogen + H2O = hydroxymethylbilane + 4 NH4(+). Its pathway is porphyrin-containing compound metabolism; protoporphyrin-IX biosynthesis; coproporphyrinogen-III from 5-aminolevulinate: step 2/4. In terms of biological role, tetrapolymerization of the monopyrrole PBG into the hydroxymethylbilane pre-uroporphyrinogen in several discrete steps. In Mycobacterium bovis (strain ATCC BAA-935 / AF2122/97), this protein is Porphobilinogen deaminase (hemC).